Here is a 487-residue protein sequence, read N- to C-terminus: Diacylglycerol kinase 4 (487 aa).

The DAGKc domain occupies 86 to 242; sequence TPEVPLMVFV…LDSWNILITM (157 aa).

Belongs to the eukaryotic diacylglycerol kinase family. In terms of assembly, monomer. Highly expressed in pollen grains. Expressed in roots, hypocotyls, leaf vasculature, developing anthers and stigmas, and receptacles of siliques.

Its subcellular location is the endoplasmic reticulum. The protein localises to the cytoplasm. It is found in the cytosol. It catalyses the reaction a 1,2-diacyl-sn-glycerol + ATP = a 1,2-diacyl-sn-glycero-3-phosphate + ADP + H(+). Phosphorylates the second messenger diacylglycerol (DAG) to generate phosphatidic acid (PA), another important signaling molecule. PA is required for plant development and responses to abiotic stress and pathogen attack. May be involved in the accumulation of PA during cold stress. Involved in the regulation of PA and phosphatidylcholine biosynthesis in growing pollen tubes. Required for nitric oxide-dependent pollen tube growth and re-orientation responses. Functions together with DGK2 in male gametophyte development and biosynthesis of phosphatidylglycerol and phosphatidylinositol in the endoplasmic reticulum (ER). Involved in PA production for pollen grain growth, as well as leaf and root growth. Possesses guanylyl cyclase activity in vitro. This chain is Diacylglycerol kinase 4, found in Arabidopsis thaliana (Mouse-ear cress).